Reading from the N-terminus, the 2225-residue chain is Nonribisomal peptide synthetase notE' (2225 aa).

Residues 24–59 are disordered; sequence TVRESLSSSPSPLPSLASPVSSGSEPPAFGETQPQS. Residues 28 to 49 show a composition bias toward low complexity; that stretch reads SLSSSPSPLPSLASPVSSGSEP. Residues 83 to 482 are adenylation 1; the sequence is QERCKEAPQS…GRRDGQLKIR (400 aa). One can recognise a Carrier 1 domain in the interval 614–690; sequence SPTTATELML…EQAQRATPMT (77 aa). Ser-651 carries the O-(pantetheine 4'-phosphoryl)serine modification. Residues 730-1142 are condensation 1; the sequence is EDIYPCTPLQ…DLASPLDQDL (413 aa). The interval 1164–1563 is adenylation 2; that stretch reads AQAMQQPSRQ…GRRDTQVKVR (400 aa). The region spanning 1699–1775 is the Carrier 2 domain; sequence PVSHGAELRL…DLARCTGEEQ (77 aa). O-(pantetheine 4'-phosphoryl)serine is present on Ser-1736. The segment at 1827–2138 is condensation 2; that stretch reads FAFHGEVSID…FILQHQNIDM (312 aa).

This sequence belongs to the NRP synthetase family.

The catalysed reaction is L-proline + L-tryptophan + 2 ATP = brevianamide F + 2 AMP + 2 diphosphate + 2 H(+). It functions in the pathway alkaloid biosynthesis. Its function is as follows. Nonribisomal peptide synthetase; part of the gene cluster that mediates the biosynthesis of notoamide, a fungal indole alkaloid that belongs to a family of natural products containing a characteristic bicyclo[2.2.2]diazaoctane core. The first step of notoamide biosynthesis involves coupling of L-proline and L-tryptophan by the bimodular NRPS notE', to produce cyclo-L-tryptophan-L-proline called brevianamide F. The reverse prenyltransferase notF' then acts as a deoxybrevianamide E synthase and converts brevianamide F to deoxybrevianamide E via reverse prenylation at C-2 of the indole ring leading to the bicyclo[2.2.2]diazaoctane core. Deoxybrevianamide E is further hydroxylated at C-6 of the indole ring, likely catalyzed by the cytochrome P450 monooxygenase notG', to yield 6-hydroxy-deoxybrevianamide E. 6-hydroxy-deoxybrevianamide E is a specific substrate of the prenyltransferase notC' for normal prenylation at C-7 to produce 6-hydroxy-7-prenyl-deoxybrevianamide, also called notoamide S. As the proposed pivotal branching point in notoamide biosynthesis, notoamide S can be diverted to notoamide E through an oxidative pyran ring closure putatively catalyzed by either notH' cytochrome P450 monooxygenase or the notD' FAD-linked oxidoreductase. This step would be followed by an indole 2,3-epoxidation-initiated pinacol-like rearrangement catalyzed by the notB' FAD-dependent monooxygenase leading to the formation of notoamide C and notoamide D. On the other hand notoamide S is converted to notoamide T by notH' (or notD'), a bifunctional oxidase that also functions as the intramolecular Diels-Alderase responsible for generation of (-)-notoamide T. To generate antipodal (+)-notoaminide T, notH (or notD) in Aspergillus strain MF297-2 is expected to catalyze a Diels-Alder reaction leading to the opposite stereochemistry. The remaining oxidoreductase notD' (or notH') likely catalyzes the oxidative pyran ring formation to yield (-)-stephacidin A. The FAD-dependent monooxygenase notI' is highly similar to notB' and is predicted to catalyze a similar conversion from (-)-stephacidin A to (+)-notoamide B via the 2,3-epoxidation of (-)-stephacidin A followed by a pinacol-type rearrangement. Finally, it remains unclear which enzyme could be responsible for the final hydroxylation steps leading to notoamide A and sclerotiamide. In Aspergillus versicolor, this protein is Nonribisomal peptide synthetase notE'.